An 82-amino-acid chain; its full sequence is Turripeptide Lol6.1 (82 aa).

Positions 1–23 (MRFHWIPTLTVLLVLSMSFGTEA) are cleaved as a signal peptide. Positions 24-48 (IPXXXXXXXXXXXXXXXXXXXXXXX) are excised as a propeptide. 3 disulfides stabilise this stretch: cysteine 54/cysteine 66, cysteine 58/cysteine 71, and cysteine 65/cysteine 77.

In terms of tissue distribution, expressed by the venom duct.

It is found in the secreted. In terms of biological role, acts as a neurotoxin by inhibiting an ion channel. The sequence is that of Turripeptide Lol6.1 from Iotyrris olangoensis (Sea snail).